A 403-amino-acid polypeptide reads, in one-letter code: S-adenosylmethionine synthase (403 aa).

ATP is bound at residue 140–145 (GKGSTD).

The protein belongs to the AdoMet synthase 2 family. Requires Mg(2+) as cofactor.

It carries out the reaction L-methionine + ATP + H2O = S-adenosyl-L-methionine + phosphate + diphosphate. The protein operates within amino-acid biosynthesis; S-adenosyl-L-methionine biosynthesis; S-adenosyl-L-methionine from L-methionine: step 1/1. Catalyzes the formation of S-adenosylmethionine from methionine and ATP. The polypeptide is S-adenosylmethionine synthase (Sulfolobus acidocaldarius (strain ATCC 33909 / DSM 639 / JCM 8929 / NBRC 15157 / NCIMB 11770)).